Reading from the N-terminus, the 437-residue chain is Serine hydroxymethyltransferase (437 aa).

Residues L130 and 134–136 each bind (6S)-5,6,7,8-tetrahydrofolate; that span reads GHL. The residue at position 239 (K239) is an N6-(pyridoxal phosphate)lysine.

It belongs to the SHMT family. Homodimer. The cofactor is pyridoxal 5'-phosphate.

The protein resides in the cytoplasm. It catalyses the reaction (6R)-5,10-methylene-5,6,7,8-tetrahydrofolate + glycine + H2O = (6S)-5,6,7,8-tetrahydrofolate + L-serine. The protein operates within one-carbon metabolism; tetrahydrofolate interconversion. Its pathway is amino-acid biosynthesis; glycine biosynthesis; glycine from L-serine: step 1/1. In terms of biological role, catalyzes the reversible interconversion of serine and glycine with tetrahydrofolate (THF) serving as the one-carbon carrier. This reaction serves as the major source of one-carbon groups required for the biosynthesis of purines, thymidylate, methionine, and other important biomolecules. Also exhibits THF-independent aldolase activity toward beta-hydroxyamino acids, producing glycine and aldehydes, via a retro-aldol mechanism. In Bartonella quintana (strain Toulouse) (Rochalimaea quintana), this protein is Serine hydroxymethyltransferase.